The chain runs to 313 residues: Kazal-type serine protease inhibitor domain-containing protein 1 (313 aa).

A signal peptide spans 1–37; sequence MPRVFTGLPANYAAPTLALSLLLPLLLVVWTQLPVSA. In terms of domain architecture, IGFBP N-terminal spans 56 to 136; that stretch reads EGEGCAPCRP…EVPEPLCVCR (81 aa). Cystine bridges form between Cys60–Cys83, Cys63–Cys85, Cys68–Cys86, Cys74–Cys89, Cys97–Cys115, Cys109–Cys133, and Cys142–Cys175. The Kazal-like domain maps to 127 to 177; that stretch reads EVPEPLCVCRSQRPLCGSDGRTYAQICRLQEAARARLDANLTVVHPGPCES. 2 N-linked (GlcNAc...) asparagine glycosylation sites follow: Asn166 and Asn190. One can recognise an Ig-like C2-type domain in the interval 179-276; it reads PQILSQPHNI…GQAEASATLT (98 aa). Cys200 and Cys260 are joined by a disulfide. Asn284 carries an N-linked (GlcNAc...) asparagine glycan. Residues 290-313 form a disordered region; that stretch reads QLQSRSLFPEEEEEAESEELGDYY. The span at 298–313 shows a compositional bias: acidic residues; it reads PEEEEEAESEELGDYY.

As to expression, highly expressed in the spleen. Moderately expressed in the skin, lung and urinary bladder. Weakly expressed in the brain, tongue, esophagus, stomach, large intestine, liver and bone. Expressed in osteoblastic cells during bone regeneration. Expressed in secretory osteoblasts in the tooth.

It localises to the secreted. It is found in the extracellular space. Its subcellular location is the extracellular matrix. Its function is as follows. Involved in the proliferation of osteoblasts during bone formation and bone regeneration. Promotes matrix assembly. The protein is Kazal-type serine protease inhibitor domain-containing protein 1 (Kazald1) of Mus musculus (Mouse).